The following is a 60-amino-acid chain: Metallothionein A (60 aa).

Residues methionine 1 to cysteine 28 form a beta region. Cysteine 4, cysteine 6, cysteine 12, cysteine 14, cysteine 18, cysteine 20, cysteine 23, cysteine 25, cysteine 28, cysteine 32, cysteine 33, cysteine 35, cysteine 36, cysteine 40, cysteine 43, cysteine 47, cysteine 49, cysteine 54, cysteine 58, and cysteine 59 together coordinate a divalent metal cation. An alpha region spans residues lysine 29–glutamine 60.

Belongs to the metallothionein superfamily. Type 1 family.

Its function is as follows. Metallothioneins have a high content of cysteine residues that bind various heavy metals. The protein is Metallothionein A (mta) of Cyprinodon sp. (Pupfish).